Reading from the N-terminus, the 582-residue chain is SUMO-activating enzyme subunit uba-2 (582 aa).

ATP is bound by residues Gly20–Gly25, Asp44, Asn52–Arg55, Lys68, Ser91–Ile92, and Asp113–Arg118. Zn(2+) is bound by residues Cys154 and Cys157. Residue Cys170 is the Glycyl thioester intermediate of the active site. Positions Ser204 to Asn214 are enriched in acidic residues. Residues Ser204 to Gly235 form a disordered region. The span at Thr219–Pro231 shows a compositional bias: basic and acidic residues. The Zn(2+) site is built by Cys431 and Cys434. Residues Phe531 to Gly570 show a composition bias toward basic and acidic residues. The tract at residues Phe531 to Ala582 is disordered.

This sequence belongs to the ubiquitin-activating E1 family. Heterodimer with aos-1.

It participates in protein modification; protein sumoylation. The dimeric enzyme acts as an E1 ligase for smo-1. It mediates ATP-dependent activation of smo-1 and formation of a thioester with a conserved cysteine residue on uba-2. The polypeptide is SUMO-activating enzyme subunit uba-2 (uba-2) (Caenorhabditis elegans).